Consider the following 284-residue polypeptide: Nucleotide-binding protein in ptsO 5'region (284 aa).

Residue 8–15 (GRSGSGKS) coordinates ATP. Residue 60-63 (DARN) participates in GTP binding.

It belongs to the RapZ-like family.

In terms of biological role, displays ATPase and GTPase activities. The protein is Nucleotide-binding protein in ptsO 5'region of Pseudomonas putida (Arthrobacter siderocapsulatus).